We begin with the raw amino-acid sequence, 148 residues long: Glutamyl-tRNA(Gln) amidotransferase subunit C, mitochondrial (148 aa).

The N-terminal 10 residues, Met-1–Tyr-10, are a transit peptide targeting the mitochondrion.

This sequence belongs to the GatC family. As to quaternary structure, subunit of the heterotrimeric GatCAB amidotransferase (AdT) complex, composed of A, B and C subunits.

The protein resides in the mitochondrion. It carries out the reaction L-glutamyl-tRNA(Gln) + L-glutamine + ATP + H2O = L-glutaminyl-tRNA(Gln) + L-glutamate + ADP + phosphate + H(+). Functionally, allows the formation of correctly charged Gln-tRNA(Gln) through the transamidation of misacylated Glu-tRNA(Gln) in the mitochondria. The reaction takes place in the presence of glutamine and ATP through an activated gamma-phospho-Glu-tRNA(Gln). This is Glutamyl-tRNA(Gln) amidotransferase subunit C, mitochondrial from Drosophila ananassae (Fruit fly).